We begin with the raw amino-acid sequence, 273 residues long: Putative phosphoenolpyruvate synthase regulatory protein (273 aa).

153 to 160 (GVSRSGKT) is a binding site for ADP.

Belongs to the pyruvate, phosphate/water dikinase regulatory protein family. PSRP subfamily.

The enzyme catalyses [pyruvate, water dikinase] + ADP = [pyruvate, water dikinase]-phosphate + AMP + H(+). It carries out the reaction [pyruvate, water dikinase]-phosphate + phosphate + H(+) = [pyruvate, water dikinase] + diphosphate. Its function is as follows. Bifunctional serine/threonine kinase and phosphorylase involved in the regulation of the phosphoenolpyruvate synthase (PEPS) by catalyzing its phosphorylation/dephosphorylation. This chain is Putative phosphoenolpyruvate synthase regulatory protein, found in Delftia acidovorans (strain DSM 14801 / SPH-1).